A 1173-amino-acid chain; its full sequence is MPGKMKTMDGNTAAAYVSYAFTDVTAIYPITPSTPMAESVDEWAAQGKKNLFGQTVKIMEMQSESGAAGAIHGALQAGALATTYTASQGLLLMTPNMYKIAGELLPAVFHVSARALATNSLNIFGDHQDSYAVRHTGCAMLAESSVQQVMDLAAVAHLTAIKGRIPFINFFDGFRTSHEIQKIEVLDYEDLAHLLDRDAVARFRQNALHPDHPVVRGTAQNPDIYFQEREASNKFYMALPEMVESYMAKISALTGREYHLFNYYGAPDAGRMIIAMGSVCETIQETVDYLNARGEKVGVLTVHLYRPFSLKHFFKYIPKSVSNIAVLDRTKEPGSLAEPLYLDVKSAFYNSDWRPVIVGGRYALGGKDILPSHIISIFDNLAAERPRDGFTVGINDDVTFTSLPLSDRDIDTSSSGTTACKFWGLGSDGTVGANKSAIKIIGDKTDMYAQAYFAYDSKKSGGVTMSHLRFGHNPIRSPYLIDKADFISCSQQSYVNKYHLLAGLKPGGTFLLNCSWDVAELDEKLPVAMKRYIAANDIQFYIVNAVGIAQKLGLGGRFNMIMQSAFFKLADIIPLTRAVEYLKQSIEHAYGNKGQKIVDMNNLAVDSGIESVVKISVPQAWKHLEDKVVSPKKLPAFIKDILIPMNRQEGDSLPVSIFDGIEDGTFPSGTSAYEKRGVAINVPVWQTDKCTQCNQCAFICPHAAIRPVLISEEERQNAPAGFSAKRASGTEDAWYRLAVSPLDCSGCGNCADVCPVKGKALSMQPLESQEHEIELWEYALSLTPKANPQNKFTVKGSQFEQPLLEFSGACGGCGETPYAKLVTQLFGDRMMIANATGCSSIWGASAPSIPYTTNHKGQGPTWANSLFEDNAEFGLGMLLGVDAIRDTLATQVKAALDNAPDVPLDAELSACLSDWLANKDQGEGTRERAEKVGDTSGFANAREKSRTPTVSMPHRDYLANGSHWIFGGDGWAYDIGFGGLDHVLASGKDVNVLVFDTEVYSNTGGQSSKSTPAAAIAQFACKKTRKKDLGMMAMSYGYVYVAQIAMGADKNQTLRAIAEAEAYPGPSLIIAYAACINHGLRIGMGCSQREARRAVEAGYWANYRYHPELKEAGKNPFILDSEEPEEDFQAFLAGEVRYSSLKKLYPEFAEFLFKKTEDDARERLEGYKKLASS.

2 consecutive 4Fe-4S ferredoxin-type domains span residues 681–710 (NVPVWQTDKCTQCNQCAFICPHAAIRPVLI) and 735–766 (YRLAVSPLDCSGCGNCADVCPVKGKALSMQPL). [4Fe-4S] cluster-binding residues include cysteine 690, cysteine 693, cysteine 696, cysteine 700, cysteine 744, cysteine 747, cysteine 750, cysteine 754, cysteine 810, cysteine 813, and cysteine 838. Positions 922–933 (GEGTRERAEKVG) are enriched in basic and acidic residues. The disordered stretch occupies residues 922-946 (GEGTRERAEKVGDTSGFANAREKSR). Cysteine 1075 lines the [4Fe-4S] cluster pocket.

This sequence belongs to the pyruvate:ferredoxin/flavodoxin oxidoreductase family. Requires [4Fe-4S] cluster as cofactor.

The enzyme catalyses oxidized [flavodoxin] + pyruvate + CoA + 2 H(+) = reduced [flavodoxin] + acetyl-CoA + CO2. Functionally, oxidoreductase required for the transfer of electrons from pyruvate to flavodoxin, which reduces nitrogenase. This Enterobacter agglomerans (Erwinia herbicola) protein is Pyruvate-flavodoxin oxidoreductase (nifJ).